A 433-amino-acid chain; its full sequence is tRNA-2-methylthio-N(6)-dimethylallyladenosine synthase (433 aa).

The region spanning 3–118 is the MTTase N-terminal domain; that stretch reads KKLFIQTLGC…ISTAVKTPKF (116 aa). 6 residues coordinate [4Fe-4S] cluster: cysteine 12, cysteine 49, cysteine 81, cysteine 150, cysteine 154, and cysteine 157. Positions 136–369 constitute a Radical SAM core domain; sequence RGSPYKSHIN…QSRHNEILDE (234 aa). The 62-residue stretch at 372-433 folds into the TRAM domain; that stretch reads AAQEGKILDV…RMVLYGELAN (62 aa).

It belongs to the methylthiotransferase family. MiaB subfamily. As to quaternary structure, monomer. The cofactor is [4Fe-4S] cluster.

The protein localises to the cytoplasm. It carries out the reaction N(6)-dimethylallyladenosine(37) in tRNA + (sulfur carrier)-SH + AH2 + 2 S-adenosyl-L-methionine = 2-methylsulfanyl-N(6)-dimethylallyladenosine(37) in tRNA + (sulfur carrier)-H + 5'-deoxyadenosine + L-methionine + A + S-adenosyl-L-homocysteine + 2 H(+). Catalyzes the methylthiolation of N6-(dimethylallyl)adenosine (i(6)A), leading to the formation of 2-methylthio-N6-(dimethylallyl)adenosine (ms(2)i(6)A) at position 37 in tRNAs that read codons beginning with uridine. The polypeptide is tRNA-2-methylthio-N(6)-dimethylallyladenosine synthase (Campylobacter curvus (strain 525.92)).